Consider the following 245-residue polypeptide: Eukaryotic translation initiation factor 6 (245 aa).

It belongs to the eIF-6 family. As to quaternary structure, monomer. Associates with the 60S ribosomal subunit.

It is found in the cytoplasm. Its subcellular location is the nucleus. The protein localises to the nucleolus. Binds to the 60S ribosomal subunit and prevents its association with the 40S ribosomal subunit to form the 80S initiation complex in the cytoplasm. May also be involved in ribosome biogenesis. This is Eukaryotic translation initiation factor 6 (eif6) from Xenopus laevis (African clawed frog).